The primary structure comprises 417 residues: NADH-quinone oxidoreductase subunit D (417 aa).

It belongs to the complex I 49 kDa subunit family. NDH-1 is composed of 14 different subunits. Subunits NuoB, C, D, E, F, and G constitute the peripheral sector of the complex.

The protein resides in the cell inner membrane. It catalyses the reaction a quinone + NADH + 5 H(+)(in) = a quinol + NAD(+) + 4 H(+)(out). Its function is as follows. NDH-1 shuttles electrons from NADH, via FMN and iron-sulfur (Fe-S) centers, to quinones in the respiratory chain. The immediate electron acceptor for the enzyme in this species is believed to be ubiquinone. Couples the redox reaction to proton translocation (for every two electrons transferred, four hydrogen ions are translocated across the cytoplasmic membrane), and thus conserves the redox energy in a proton gradient. The chain is NADH-quinone oxidoreductase subunit D from Azoarcus sp. (strain BH72).